Here is a 152-residue protein sequence, read N- to C-terminus: 3-hydroxyacyl-[acyl-carrier-protein] dehydratase FabZ (152 aa).

Histidine 57 is a catalytic residue.

It belongs to the thioester dehydratase family. FabZ subfamily.

The protein localises to the cytoplasm. It catalyses the reaction a (3R)-hydroxyacyl-[ACP] = a (2E)-enoyl-[ACP] + H2O. Involved in unsaturated fatty acids biosynthesis. Catalyzes the dehydration of short chain beta-hydroxyacyl-ACPs and long chain saturated and unsaturated beta-hydroxyacyl-ACPs. The chain is 3-hydroxyacyl-[acyl-carrier-protein] dehydratase FabZ from Pasteurella multocida (strain Pm70).